The chain runs to 179 residues: TPD1 protein homolog 1 (179 aa).

The N-terminal stretch at 1–30 is a signal peptide; the sequence is MRMEHIYKFQHWLFFIGLGVLLSLSLSVKA.

The polypeptide is TPD1 protein homolog 1 (Arabidopsis thaliana (Mouse-ear cress)).